Here is a 2388-residue protein sequence, read N- to C-terminus: Hybrid signal transduction histidine kinase M (2388 aa).

Disordered stretches follow at residues 1-32 (MSNY…NNFN), 42-61 (FNTP…NSIS), 69-111 (NECN…STPI), 123-209 (NRSN…NAYP), 237-337 (TLLN…SPKL), 361-421 (SPHG…YNDN), 430-449 (TRNT…SSSF), and 486-542 (IYTP…NNNE). Polar residues predominate over residues 69-82 (NECNSGGEQSPKIK). Composition is skewed to low complexity over residues 83 to 110 (TNNN…KSTP), 125 to 206 (SNLN…SNSN), and 242 to 288 (SSNN…NNGG). Residues 293-306 (QFISSDNKYNTVGN) are compositionally biased toward polar residues. A compositionally biased stretch (basic residues) spans 309–322 (HHHHHHQLHNHRHS). 4 stretches are compositionally biased toward low complexity: residues 325–337 (QGSS…SPKL), 361–399 (SPHG…NQNN), 410–419 (NNSNDSFDYN), and 432–449 (NTGY…SSSF). Over residues 489–505 (PPYPQPYPQPPQLPPPS) the composition is skewed to pro residues. Residues 506-541 (SSSSLSKENDNVDNNNTNNNNNNNNNNNNNNNNNNN) are compositionally biased toward low complexity. Transmembrane regions (helical) follow at residues 550-570 (TMNL…FLMV), 589-609 (FILI…LLVV), 645-665 (YIFL…NLFF), and 679-699 (NIST…SHIP). The tract at residues 732–888 (NNDNKNKIND…NNNEEDDEEE (157 aa)) is disordered. The span at 735–744 (NKNKINDKSD) shows a compositional bias: basic and acidic residues. Positions 745-880 (NSNSITNNNN…NNNNNNNNNN (136 aa)) are enriched in low complexity. 3 consecutive transmembrane segments (helical) span residues 896-916 (FQIF…LIVL), 953-973 (VQFQ…LLLV), and 1025-1045 (CSVG…WMSI). The 407-residue stretch at 1093–1499 (RLVQNTGSII…VFELQVPMKC (407 aa)) folds into the Histidine kinase domain. Positions 1236–1257 (PIHHHRHHHRHHHHHHHHHHHH) are enriched in basic residues. The segment at 1236 to 1410 (PIHHHRHHHR…INNNINNNNN (175 aa)) is disordered. Residues 1260–1274 (DDDDYDDDNDDDNNT) show a composition bias toward acidic residues. A compositionally biased stretch (basic and acidic residues) spans 1286–1315 (LSDKIKDNQDENLELKKSNNDKIIENKENQ). The segment covering 1316–1410 (ENNNNNNNNN…INNNINNNNN (95 aa)) has biased composition (low complexity). Positions 1541–1656 (KILVIDDNPN…QLTVLSQLLP (116 aa)) constitute a Response regulatory 1 domain. Aspartate 1592 is modified (4-aspartylphosphate). Disordered stretches follow at residues 1666-1702 (SNQN…NIDF), 1960-2022 (GNNS…NSSN), 2036-2121 (CKGD…DIIN), 2133-2183 (QQQL…VKSS), and 2218-2256 (NQLN…NNND). Residues 1676 to 1696 (SNGGGGGGGGGGGGGGGGGSG) show a composition bias toward gly residues. Residues 1974–1985 (TNNNTTTTTTTT) show a composition bias toward low complexity. Positions 1986–2010 (QPKKSPILTSSNGSDKSEGSTGSNR) are enriched in polar residues. Residues 2054–2064 (DSSSSSSSSDS) are compositionally biased toward low complexity. The segment covering 2065–2076 (HGQDDHSYRLED) has biased composition (basic and acidic residues). Low complexity-rich tracts occupy residues 2078–2109 (SISS…SGIN) and 2133–2165 (QQQL…LPIP). Positions 2169-2183 (INSSGASSGIKVKSS) are enriched in polar residues. The Response regulatory 2 domain occupies 2262-2383 (NILLVEDNLV…LLISLLKKLV (122 aa)). Residue aspartate 2313 is modified to 4-aspartylphosphate.

Post-translationally, activation probably requires transfer of a phosphate group between a histidine in the kinase core (transmitter) domain and an aspartate of the receiver domain.

Its subcellular location is the membrane. It carries out the reaction ATP + protein L-histidine = ADP + protein N-phospho-L-histidine.. Functionally, acts as a receptor histidine kinase for a signal transduction pathway. This protein undergoes an ATP-dependent autophosphorylation at a conserved histidine residue in the kinase core, and a phosphoryl group is then transferred to a conserved aspartate residue in the receiver domain. In Dictyostelium discoideum (Social amoeba), this protein is Hybrid signal transduction histidine kinase M (dhkM).